The sequence spans 363 residues: Crh-like protein 3 (363 aa).

A signal peptide spans 1–19; that stretch reads MSLLYLVALFVASICSVTA. A disulfide bridge connects residues Cys-25 and Cys-32. Residues 26-237 form the GH16 domain; sequence NPLTTTCPPD…YSKAPFTMVL (212 aa). Residues Asn-41, Asn-47, and Asn-56 are each glycosylated (N-linked (GlcNAc...) asparagine). The active-site Nucleophile is Glu-118. Glu-122 serves as the catalytic Proton donor. Position 122 (Glu-122) interacts with chitin. Asn-127, Asn-141, and Asn-161 each carry an N-linked (GlcNAc...) asparagine glycan. Chitin-binding residues include Arg-203, Trp-207, and Thr-218. Asn-252 and Asn-269 each carry an N-linked (GlcNAc...) asparagine glycan. A helical transmembrane segment spans residues 298–318; sequence VYIGAGCVGAALLAGFIFFFI.

It belongs to the glycosyl hydrolase 16 family. CRH1 subfamily. In terms of processing, the GPI-like anchor contains a phosphoceramide lipid group. The anchor position has not been determined.

It is found in the cell membrane. The protein localises to the secreted. The protein resides in the cell wall. The catalysed reaction is Random endo-hydrolysis of N-acetyl-beta-D-glucosaminide (1-&gt;4)-beta-linkages in chitin and chitodextrins.. Dual chitinase/transglycosylase that plays a role in cell wall architecture. Chitinase and transglycosylase activities are coupled. Required for the polysaccharide cross-linking at the septa and the cell wall. More specifically, transfers chitin to 1,6-beta-glucan in the cell wall. This is Crh-like protein 3 from Aspergillus fumigatus (strain ATCC MYA-4609 / CBS 101355 / FGSC A1100 / Af293) (Neosartorya fumigata).